The chain runs to 369 residues: UDP-N-acetylglucosamine--N-acetylmuramyl-(pentapeptide) pyrophosphoryl-undecaprenol N-acetylglucosamine transferase (369 aa).

UDP-N-acetyl-alpha-D-glucosamine-binding positions include T16–G18, N130, R171, S196, and Q297.

Belongs to the glycosyltransferase 28 family. MurG subfamily.

It localises to the cell inner membrane. The enzyme catalyses di-trans,octa-cis-undecaprenyl diphospho-N-acetyl-alpha-D-muramoyl-L-alanyl-D-glutamyl-meso-2,6-diaminopimeloyl-D-alanyl-D-alanine + UDP-N-acetyl-alpha-D-glucosamine = di-trans,octa-cis-undecaprenyl diphospho-[N-acetyl-alpha-D-glucosaminyl-(1-&gt;4)]-N-acetyl-alpha-D-muramoyl-L-alanyl-D-glutamyl-meso-2,6-diaminopimeloyl-D-alanyl-D-alanine + UDP + H(+). The protein operates within cell wall biogenesis; peptidoglycan biosynthesis. Cell wall formation. Catalyzes the transfer of a GlcNAc subunit on undecaprenyl-pyrophosphoryl-MurNAc-pentapeptide (lipid intermediate I) to form undecaprenyl-pyrophosphoryl-MurNAc-(pentapeptide)GlcNAc (lipid intermediate II). This chain is UDP-N-acetylglucosamine--N-acetylmuramyl-(pentapeptide) pyrophosphoryl-undecaprenol N-acetylglucosamine transferase, found in Desulfotalea psychrophila (strain LSv54 / DSM 12343).